The following is a 117-amino-acid chain: B-enzyme (117 aa).

Residue aspartate 89 is part of the active site.

It carries out the reaction Hydrolysis of (1-&gt;4)-beta-linkages between N-acetylmuramic acid and N-acetyl-D-glucosamine residues in a peptidoglycan and between N-acetyl-D-glucosamine residues in chitodextrins.. The polypeptide is B-enzyme (lyzB) (Bacillus subtilis).